The sequence spans 855 residues: E3 ubiquitin-protein ligase TRIM71 (855 aa).

Residue alanine 2 is modified to N-acetylalanine. The RING-type zinc finger occupies 12-94 (CLLCKEMCGS…ALKLRCPVCD (83 aa)). Low complexity predominate over residues 26 to 42 (SSNSSASSSSSQTSTSS). Disordered stretches follow at residues 26 to 48 (SSNS…GGGP) and 127 to 177 (EEPP…SPGS). The span at 135–145 (RAGGGPGGAGG) shows a compositional bias: gly residues. Basic residues predominate over residues 147–157 (SNHRHHAHHPA). The B box-type 1; atypical zinc-finger motif lies at 181-228 (RRPHGCSSCDEGNAASSRCLDCQEHLCDNCVRAHQRVRLTKDHYIERG). A B box-type 2 zinc finger spans residues 260–301 (ERLGFCQHHDDEVLHLYCDTCSVPICRECTLGRHGGHSFAYL). Positions 265, 268, 288, and 293 each coordinate Zn(2+). Coiled-coil stretches lie at residues 314–352 (QLLA…SEVK) and 378–411 (QVKA…VLEE). Residues 466–567 (SSGAFAPLTK…IENSPFKVVV (102 aa)) form a Filamin repeat. NHL repeat units follow at residues 580-623 (GLSF…FKPC), 627-670 (HHKF…FTFE), 674-717 (LLKF…FGPD), 721-764 (LNKY…IHPD), 768-811 (ARFL…FEAN), and 815-855 (LCKF…ILIF).

This sequence belongs to the TRIM/RBCC family. In terms of assembly, interacts (via NHL repeats) with AGO2; the interaction increases in presence of RNA. Interacts with HSP90AA1. Interacts (via NHL repeats) with MOV10, PABPC1, PUM1, PUM2, STAU2, XRN1 and XRN2 in an RNA-dependent manner. Interacts with SHCBP1; leading to enhance its stability. In terms of processing, autoubiquitinated. Highly expressed in undifferentiated embryonic stem cells (ESCs). Expressed in the epiblast and in interfollicular epidermal stem cells during early development. Also expressed in male germ cells and in the reproductive tract. Highly expressed in neuroepithelial cells, and its expression declines as neurogenesis proceeds (at protein level). Expressed in ependymal cells of the brain.

The protein localises to the cytoplasm. Its subcellular location is the P-body. The catalysed reaction is S-ubiquitinyl-[E2 ubiquitin-conjugating enzyme]-L-cysteine + [acceptor protein]-L-lysine = [E2 ubiquitin-conjugating enzyme]-L-cysteine + N(6)-ubiquitinyl-[acceptor protein]-L-lysine.. Its pathway is protein modification; protein ubiquitination. E3 ubiquitin-protein ligase that cooperates with the microRNAs (miRNAs) machinery and promotes embryonic stem cells proliferation and maintenance. Binds to miRNAs and associates with AGO2, participating in post-transcriptional repression of transcripts such as CDKN1A. Facilitates the G1-S transition to promote rapid embryonic stem cell self-renewal by repressing CDKN1A expression. In addition, participates in post-transcriptional mRNA repression in a miRNA independent mechanism. Required to maintain proliferation and prevent premature differentiation of neural progenitor cells during early neural development: positively regulates FGF signaling by controlling the stability of SHCBP1. Specific regulator of miRNA biogenesis. miRNA Binds MIR29A hairpin and postranscriptionally modulates MIR29A levels, which indirectly regulates TET proteins expression. The chain is E3 ubiquitin-protein ligase TRIM71 (Trim71) from Mus musculus (Mouse).